The chain runs to 339 residues: ATPase GET3 (339 aa).

Lysine 37 to threonine 44 is a binding site for ATP. Aspartate 66 is an active-site residue. ATP-binding residues include glutamate 237 and asparagine 264. Positions 275 and 278 each coordinate Zn(2+).

The protein belongs to the arsA ATPase family. Homodimer.

It localises to the cytoplasm. The protein resides in the endoplasmic reticulum. ATPase required for the post-translational delivery of tail-anchored (TA) proteins to the endoplasmic reticulum. Recognizes and selectively binds the transmembrane domain of TA proteins in the cytosol. This complex then targets to the endoplasmic reticulum by membrane-bound receptors, where the tail-anchored protein is released for insertion. This process is regulated by ATP binding and hydrolysis. ATP binding drives the homodimer towards the closed dimer state, facilitating recognition of newly synthesized TA membrane proteins. ATP hydrolysis is required for insertion. Subsequently, the homodimer reverts towards the open dimer state, lowering its affinity for the membrane-bound receptor, and returning it to the cytosol to initiate a new round of targeting. The sequence is that of ATPase GET3 from Rhodotorula glutinis (Yeast).